The following is a 425-amino-acid chain: O-methyltransferase AMT9 (425 aa).

S-adenosyl-L-methionine contacts are provided by residues 257 to 258 (GG), Asp-280, 306 to 307 (DF), Arg-322, and Arg-323. Residue His-326 is the Proton acceptor of the active site.

This sequence belongs to the class I-like SAM-binding methyltransferase superfamily. Cation-independent O-methyltransferase family.

The protein operates within mycotoxin biosynthesis. O-methyltransferase; part of the gene clusters that mediate the biosynthesis of AM-toxins, host-selective toxins (HSTs) causing Alternaria blotch on apple, a worldwide distributed disease. AM-toxins are cyclic depsipeptides containing the 3 residues 2-hydroxy-isovaleric acid (2-HIV), dehydroalanine, L-alanine which are common for all 3 AM-toxins I to III. The fourth precursor is L-alpha-amino-methoxyphenyl-valeric acid (L-Amv) for AM-toxin I, L-alpha-amino-phenyl-valeric acid (L-Apv) for AM-toxin II, and L-alpha-amino-hydroxyphenyl-valeric acid (L-Ahv) for AM-toxin III. AM-toxins have two target sites for affecting susceptible apple cells; they cause invagination of the plasma membrane and electrolyte loss and chloroplast disorganization. The non-ribosomal peptide synthetase AMT1 contains 4 catalytic modules and is responsible for activation of each residue in AM-toxin. The aldo-keto reductase AMT2 catalyzes the conversion of 2-keto-isovaleric acid (2-KIV) to 2-hydroxy-isovaleric acid (2-HIV), one of the precursor residues incorporated by AMT1 during AM-toxin biosynthesis, by reduction of its ketone to an alcohol. The cytochrome P450 monooxygenase AMT3 and the thioesterase AMT4 are also important for AM-toxin production, but their exact function within the AM-toxin biosynthesis are not known yet. Up to 21 proteins (including AMT1 to AMT4) are predicted to be involved in AM-toxin biosynthesis since their expression ishighly up-regulated in AM-toxin-producing cultures. The polypeptide is O-methyltransferase AMT9 (Alternaria alternata (Alternaria rot fungus)).